Consider the following 203-residue polypeptide: uncharacterized protein (203 aa).

The helical transmembrane segment at 180 to 200 threads the bilayer; that stretch reads VYLLLFGIPLLILIFLIIFFI.

The protein localises to the virion. Its subcellular location is the host membrane. This is an uncharacterized protein from Acanthamoeba polyphaga (Amoeba).